A 274-amino-acid polypeptide reads, in one-letter code: Large ribosomal subunit protein uL2 (274 aa).

The disordered stretch occupies residues 223–274 (VAMNPVDHPHGGGEGRTSGGRHPVTPWGVPTKGYKTRSNKRTDKYIVRRRNK).

This sequence belongs to the universal ribosomal protein uL2 family. Part of the 50S ribosomal subunit. Forms a bridge to the 30S subunit in the 70S ribosome.

In terms of biological role, one of the primary rRNA binding proteins. Required for association of the 30S and 50S subunits to form the 70S ribosome, for tRNA binding and peptide bond formation. It has been suggested to have peptidyltransferase activity; this is somewhat controversial. Makes several contacts with the 16S rRNA in the 70S ribosome. This chain is Large ribosomal subunit protein uL2, found in Shewanella putrefaciens (strain CN-32 / ATCC BAA-453).